A 196-amino-acid chain; its full sequence is Peptide deformylase (196 aa).

2 residues coordinate Fe cation: C97 and H139. Residue E140 is part of the active site. Fe cation is bound at residue H143. A compositionally biased stretch (basic and acidic residues) spans 171–187 (LDAQEPKRAPHSPHTDA). The tract at residues 171 to 196 (LDAQEPKRAPHSPHTDAQKPGAASDL) is disordered.

The protein belongs to the polypeptide deformylase family. Fe(2+) serves as cofactor.

It catalyses the reaction N-terminal N-formyl-L-methionyl-[peptide] + H2O = N-terminal L-methionyl-[peptide] + formate. Its function is as follows. Removes the formyl group from the N-terminal Met of newly synthesized proteins. Requires at least a dipeptide for an efficient rate of reaction. N-terminal L-methionine is a prerequisite for activity but the enzyme has broad specificity at other positions. The sequence is that of Peptide deformylase from Methylocella silvestris (strain DSM 15510 / CIP 108128 / LMG 27833 / NCIMB 13906 / BL2).